Here is a 433-residue protein sequence, read N- to C-terminus: Coiled-coil domain-containing protein 71 (433 aa).

Ser-125 carries the phosphoserine modification. 3 disordered regions span residues 204–256 (LKVR…GCSA), 284–310 (QTKTVRVRAKAKQAKPKAARAKAKAAV), and 325–396 (KAAQ…RKSQ). Composition is skewed to basic residues over residues 216–230 (KAPRKITSKGLKHLT) and 288–306 (VRVRAKAKQAKPKAARAKA). A coiled-coil region spans residues 260-330 (KTVQAQASQT…QAKAKAAQTK (71 aa)).

The chain is Coiled-coil domain-containing protein 71 (Ccdc71) from Mus musculus (Mouse).